The primary structure comprises 98 residues: NADH-ubiquinone oxidoreductase chain 4L (98 aa).

The next 3 membrane-spanning stretches (helical) occupy residues 1–21, 26–46, and 61–81; these read MSPV…GLAF, LLSA…AIAL, and MILL…LVAA.

The protein belongs to the complex I subunit 4L family.

Its subcellular location is the mitochondrion membrane. The enzyme catalyses a ubiquinone + NADH + 5 H(+)(in) = a ubiquinol + NAD(+) + 4 H(+)(out). Core subunit of the mitochondrial membrane respiratory chain NADH dehydrogenase (Complex I) which catalyzes electron transfer from NADH through the respiratory chain, using ubiquinone as an electron acceptor. Part of the enzyme membrane arm which is embedded in the lipid bilayer and involved in proton translocation. The chain is NADH-ubiquinone oxidoreductase chain 4L (MT-ND4L) from Squalus acanthias (Spiny dogfish).